The chain runs to 100 residues: Large ribosomal subunit protein uL23 (100 aa).

The protein belongs to the universal ribosomal protein uL23 family. As to quaternary structure, part of the 50S ribosomal subunit. Contacts protein L29, and trigger factor when it is bound to the ribosome.

In terms of biological role, one of the early assembly proteins it binds 23S rRNA. One of the proteins that surrounds the polypeptide exit tunnel on the outside of the ribosome. Forms the main docking site for trigger factor binding to the ribosome. The sequence is that of Large ribosomal subunit protein uL23 from Thermotoga neapolitana (strain ATCC 49049 / DSM 4359 / NBRC 107923 / NS-E).